The following is a 140-amino-acid chain: Protein archease (140 aa).

Asp11, Asp139, and Leu140 together coordinate Ca(2+).

This sequence belongs to the archease family.

Functionally, activates the tRNA-splicing ligase complex by facilitating the enzymatic turnover of catalytic subunit RtcB. Acts by promoting the guanylylation of RtcB, a key intermediate step in tRNA ligation. Can also alter the NTP specificity of RtcB such that ATP, dGTP or ITP is used efficiently. This is Protein archease from Methanopyrus kandleri (strain AV19 / DSM 6324 / JCM 9639 / NBRC 100938).